Reading from the N-terminus, the 382-residue chain is Lipid-A-disaccharide synthase (382 aa).

Belongs to the LpxB family.

The enzyme catalyses a lipid X + a UDP-2-N,3-O-bis[(3R)-3-hydroxyacyl]-alpha-D-glucosamine = a lipid A disaccharide + UDP + H(+). Its pathway is bacterial outer membrane biogenesis; LPS lipid A biosynthesis. In terms of biological role, condensation of UDP-2,3-diacylglucosamine and 2,3-diacylglucosamine-1-phosphate to form lipid A disaccharide, a precursor of lipid A, a phosphorylated glycolipid that anchors the lipopolysaccharide to the outer membrane of the cell. The polypeptide is Lipid-A-disaccharide synthase (Alkalilimnicola ehrlichii (strain ATCC BAA-1101 / DSM 17681 / MLHE-1)).